The following is a 400-amino-acid chain: tRNA(Ile)-lysidine synthase (400 aa).

Position 25 to 30 (25 to 30) interacts with ATP; it reads SGGVDS.

This sequence belongs to the tRNA(Ile)-lysidine synthase family.

The protein localises to the cytoplasm. The catalysed reaction is cytidine(34) in tRNA(Ile2) + L-lysine + ATP = lysidine(34) in tRNA(Ile2) + AMP + diphosphate + H(+). Its function is as follows. Ligates lysine onto the cytidine present at position 34 of the AUA codon-specific tRNA(Ile) that contains the anticodon CAU, in an ATP-dependent manner. Cytidine is converted to lysidine, thus changing the amino acid specificity of the tRNA from methionine to isoleucine. This Francisella philomiragia subsp. philomiragia (strain ATCC 25017 / CCUG 19701 / FSC 153 / O#319-036) protein is tRNA(Ile)-lysidine synthase.